We begin with the raw amino-acid sequence, 163 residues long: MSKTSVIYPGTFDPITNGHVDLVTRASRMFDEVVVAIAIGHHKNPLFSLEERVALAQSSLGHLSNVEFVGFDGLLVNFFKEQKATAVLRGLRAVSDFEYEFQLANMNRQLDPHFEAVFLTPSEQYSFISSTLIREIARLKGDVTKFVPQAVVEAFERKHQQGW.

Substrate is bound at residue T11. ATP-binding positions include 11–12 (TF) and H19. Substrate contacts are provided by K43, L75, and R89. Residues 90-92 (GLR), E100, and 125-131 (YSFISST) each bind ATP.

The protein belongs to the bacterial CoaD family. In terms of assembly, homohexamer. The cofactor is Mg(2+).

The protein resides in the cytoplasm. It catalyses the reaction (R)-4'-phosphopantetheine + ATP + H(+) = 3'-dephospho-CoA + diphosphate. The protein operates within cofactor biosynthesis; coenzyme A biosynthesis; CoA from (R)-pantothenate: step 4/5. Functionally, reversibly transfers an adenylyl group from ATP to 4'-phosphopantetheine, yielding dephospho-CoA (dPCoA) and pyrophosphate. The sequence is that of Phosphopantetheine adenylyltransferase from Acinetobacter baumannii (strain SDF).